We begin with the raw amino-acid sequence, 420 residues long: Anaerobic glycerol-3-phosphate dehydrogenase subunit B (420 aa).

Belongs to the anaerobic G-3-P dehydrogenase subunit B family. As to quaternary structure, composed of a catalytic GlpA/B dimer and of membrane bound GlpC. FMN serves as cofactor.

The enzyme catalyses a quinone + sn-glycerol 3-phosphate = dihydroxyacetone phosphate + a quinol. The protein operates within polyol metabolism; glycerol degradation via glycerol kinase pathway; glycerone phosphate from sn-glycerol 3-phosphate (anaerobic route): step 1/1. Functionally, conversion of glycerol 3-phosphate to dihydroxyacetone. Uses fumarate or nitrate as electron acceptor. This chain is Anaerobic glycerol-3-phosphate dehydrogenase subunit B, found in Pectobacterium carotovorum subsp. carotovorum (strain PC1).